Reading from the N-terminus, the 270-residue chain is Replication protein A 32 kDa subunit (270 aa).

Met-1 is subject to N-acetylmethionine. 2 positions are modified to phosphoserine; by PRKDC: Ser-4 and Ser-8. Phosphothreonine; by PRKDC is present on Thr-21. Positions 21–41 are disordered; sequence TQSPGGFGSPAPSQAEKKSRA. The residue at position 23 (Ser-23) is a Phosphoserine; by CDK2. Residue Ser-29 is modified to Phosphoserine; by CDK1. Residue Ser-33 is modified to Phosphoserine; by PRKDC. Glycyl lysine isopeptide (Lys-Gly) (interchain with G-Cter in ubiquitin) cross-links involve residues Lys-37 and Lys-38. Residues 74–148 constitute a DNA-binding region (OB); sequence VTIVGIIRHA…KSLVAFKIMP (75 aa). The segment at 187-270 is interaction with RAD52, TIPIN, UNG and XPA; sequence GMSEAGNFGG…DDHFKSTDAE (84 aa).

The protein belongs to the replication factor A protein 2 family. As to quaternary structure, component of the replication protein A complex (RPA/RP-A), a heterotrimeric complex composed of RPA1, RPA2 and RPA3. Interacts with PRPF19; the PRP19-CDC5L complex is recruited to the sites of DNA repair where it ubiquitinates the replication protein A complex (RPA). Interacts with SERTAD3. Interacts with TIPIN. Interacts with TIMELESS. Interacts with PPP4R2; the interaction is direct, DNA damage-dependent and mediates the recruitment of the PP4 catalytic subunit PPP4C. Interacts (hyperphosphorylated) with RAD51. Interacts with SMARCAL1; the interaction is direct and mediates the recruitment to the RPA complex of SMARCAL1. Interacts with RAD52 and XPA; those interactions are direct and associate RAD52 and XPA to the RPA complex. Interacts with FBH1. Interacts with ETAA1; the interaction is direct and promotes ETAA1 recruitment at stalled replication forks. Interacts with RFWD3. Interacts with DDI2. Interacts (in unphosphorylated form via N-terminus) with EIF4EBP3; the interaction enhances EIF4EBP3-mediated inhibition of EIF4E-mediated mRNA nuclear export. Interacts with BRIP1/FANCJ via the RPA1 subunit; following DNA damage they colocalize in foci in the nucleus. Interacts with nuclear UNG (isoform 2); this interaction mediates UNG recruitment to RPA-coated single-stranded DNA at stalled replication forks. Post-translationally, differentially phosphorylated throughout the cell cycle, becoming phosphorylated at the G1-S transition and dephosphorylated in late mitosis. Mainly phosphorylated at Ser-23 and Ser-29, by cyclin A-CDK2 and cyclin B-CDK1, respectively during DNA replication and mitosis. Dephosphorylation may require the serine/threonine-protein phosphatase 4. Phosphorylation at Ser-23 and Ser-29 is a prerequisite for further phosphorylation. Becomes hyperphosphorylated on additional residues including Ser-4, Ser-8, Thr-21 and Ser-33 in response to DNA damage. Hyperphosphorylation is mediated by ATM, ATR and PRKDC. Primarily recruited to DNA repair nuclear foci as a hypophosphorylated form it undergoes subsequent hyperphosphorylation, catalyzed by ATR. Hyperphosphorylation is required for RAD51 recruitment to chromatin and efficient DNA repair. Phosphorylation at Thr-21 depends upon RFWD3 presence. DNA damage-induced 'Lys-63'-linked polyubiquitination by PRPF19 mediates ATRIP recruitment to the RPA complex at sites of DNA damage and activation of ATR. Ubiquitinated by RFWD3 at stalled replication forks in response to DNA damage: ubiquitination by RFWD3 does not lead to degradation by the proteasome and promotes removal of the RPA complex from stalled replication forks, promoting homologous recombination.

It localises to the nucleus. It is found in the PML body. Its function is as follows. As part of the heterotrimeric replication protein A complex (RPA/RP-A), binds and stabilizes single-stranded DNA intermediates that form during DNA replication or upon DNA stress. It prevents their reannealing and in parallel, recruits and activates different proteins and complexes involved in DNA metabolism. Thereby, it plays an essential role both in DNA replication and the cellular response to DNA damage. In the cellular response to DNA damage, the RPA complex controls DNA repair and DNA damage checkpoint activation. Through recruitment of ATRIP activates the ATR kinase a master regulator of the DNA damage response. It is required for the recruitment of the DNA double-strand break repair factors RAD51 and RAD52 to chromatin in response to DNA damage. Also recruits to sites of DNA damage proteins like XPA and XPG that are involved in nucleotide excision repair and is required for this mechanism of DNA repair. Also plays a role in base excision repair (BER) probably through interaction with UNG. Also recruits SMARCAL1/HARP, which is involved in replication fork restart, to sites of DNA damage. May also play a role in telomere maintenance. RPA stimulates 5'-3' helicase activity of BRIP1/FANCJ. The polypeptide is Replication protein A 32 kDa subunit (RPA2) (Homo sapiens (Human)).